The chain runs to 176 residues: NAD(P)H-quinone oxidoreductase subunit 6, chloroplastic (176 aa).

Helical transmembrane passes span 10-30, 32-52, 61-81, 92-112, and 152-172; these read FLLVFLGSGLLVGGLGVVLLP, PIFSAFSLGFVLVCISLLYIL, AQLLIYVGAINVLIIFAVMFM, LWTVGNGITSLVCTTILFSLM, and FFLPFELISIILLVALIGAIS.

This sequence belongs to the complex I subunit 6 family. NDH is composed of at least 16 different subunits, 5 of which are encoded in the nucleus.

It localises to the plastid. It is found in the chloroplast thylakoid membrane. It carries out the reaction a plastoquinone + NADH + (n+1) H(+)(in) = a plastoquinol + NAD(+) + n H(+)(out). It catalyses the reaction a plastoquinone + NADPH + (n+1) H(+)(in) = a plastoquinol + NADP(+) + n H(+)(out). NDH shuttles electrons from NAD(P)H:plastoquinone, via FMN and iron-sulfur (Fe-S) centers, to quinones in the photosynthetic chain and possibly in a chloroplast respiratory chain. The immediate electron acceptor for the enzyme in this species is believed to be plastoquinone. Couples the redox reaction to proton translocation, and thus conserves the redox energy in a proton gradient. This chain is NAD(P)H-quinone oxidoreductase subunit 6, chloroplastic (ndhG), found in Nasturtium officinale (Watercress).